A 410-amino-acid polypeptide reads, in one-letter code: Phosphoserine phosphatase (410 aa).

Positions 13–91 (LVKIFGKDRP…QAEIISGIGD (79 aa)) constitute an ACT domain. The active-site Nucleophile is the Asp-187. Asp-187 and Asp-189 together coordinate Mg(2+). Asp-189 acts as the Proton donor in catalysis. Substrate is bound by residues Glu-196, Arg-232, 275-276 (SG), and Lys-320. Asp-343 is a Mg(2+) binding site. Asn-346 contacts substrate.

Belongs to the HAD-like hydrolase superfamily. SerB family. Mg(2+) serves as cofactor.

The enzyme catalyses O-phospho-L-serine + H2O = L-serine + phosphate. It catalyses the reaction O-phospho-D-serine + H2O = D-serine + phosphate. It participates in amino-acid biosynthesis; L-serine biosynthesis; L-serine from 3-phospho-D-glycerate: step 3/3. In terms of biological role, catalyzes the dephosphorylation of phosphoserine (P-Ser) in vitro. Also catalyzes the dephosphorylation of phosphothreonine (P-Thr) in vitro. In Streptomyces coelicolor (strain ATCC BAA-471 / A3(2) / M145), this protein is Phosphoserine phosphatase.